Here is a 68-residue protein sequence, read N- to C-terminus: Large ribosomal subunit protein bL31 (68 aa).

4 residues coordinate Zn(2+): cysteine 16, cysteine 18, cysteine 38, and cysteine 41.

It belongs to the bacterial ribosomal protein bL31 family. Type A subfamily. Part of the 50S ribosomal subunit. Requires Zn(2+) as cofactor.

Its function is as follows. Binds the 23S rRNA. The sequence is that of Large ribosomal subunit protein bL31 from Thiobacillus denitrificans (strain ATCC 25259 / T1).